Reading from the N-terminus, the 368-residue chain is Probable magnesium transporter (368 aa).

At 1–4 (MEDK) the chain is on the extracellular side. The chain crosses the membrane as a helical span at residues 5–25 (YIGLALAMSSSLAIGTSFIIT). The Cytoplasmic segment spans residues 26-50 (KKGLMDASARTGGTDGVQASDYLQN). The helical transmembrane segment at 51-71 (PIWWGGMITMAIGEIANFAAY) threads the bilayer. The Extracellular segment spans residues 72–76 (TFAPA). A helical membrane pass occupies residues 77-97 (ILVTPLGALSVIIGAVLAAIF). Topologically, residues 98-101 (LKER) are cytoplasmic. The chain crosses the membrane as a helical span at residues 102–122 (LGTLGKMGCAICLMGSVIIIL). Residues 123 to 143 (HAPPDKEVQTVDEILGYATQP) lie on the Extracellular side of the membrane. Residues 144-164 (GFMFYCTVVTLYSLFMIYKIV) traverse the membrane as a helical segment. The Cytoplasmic segment spans residues 165–175 (PKYGNTNPMIY). Residues 176-196 (LSICSSVGSISVMSIKAFGIA) form a helical membrane-spanning segment. At 197–206 (LKLTLGGNNQ) the chain is on the extracellular side. The chain crosses the membrane as a helical span at residues 207 to 227 (FTHVSTYLFLIVVALCIVTQM). Over 228 to 240 (NYFNKALDQFDTS) the chain is Cytoplasmic. The helical transmembrane segment at 241–261 (IVNPLYYVTFTTFTLAASFIL) threads the bilayer. The Extracellular portion of the chain corresponds to 262 to 269 (FKGFNTSS). Asn-266 carries an N-linked (GlcNAc...) asparagine glycan. Residues 270–290 (AVDIISLLIGFLIIFSGVYLL) traverse the membrane as a helical segment. Residues 291-368 (NISRSESPMV…GDEDTRNYRH (78 aa)) lie on the Cytoplasmic side of the membrane.

The protein belongs to the NIPA family.

The protein localises to the cell membrane. It is found in the early endosome. The enzyme catalyses Mg(2+)(in) = Mg(2+)(out). In terms of biological role, probably acts as a selective Mg(2+) transporter. Plays a role in cell wall integrity and in engulfment by host macrophages. This is Probable magnesium transporter from Candida albicans (strain SC5314 / ATCC MYA-2876) (Yeast).